The following is a 329-amino-acid chain: Gamma-resorcylate decarboxylase (329 aa).

Zn(2+) is bound by residues Glu-8, His-10, His-167, and Asp-290. The active site involves Asp-290.

This sequence belongs to the metallo-dependent hydrolases superfamily. ACMSD family. Zn(2+) is required as a cofactor.

It carries out the reaction 2,6-dihydroxybenzoate + H(+) = resorcinol + CO2. The protein operates within aromatic compound metabolism. In terms of biological role, involved in the gamma-resorcylate (2,6-dihydroxybenzoate) catabolism. Catalyzes the reversible decarboxylation of gamma-resorcylate to resorcinol. This is Gamma-resorcylate decarboxylase from Rhodococcus jostii (strain RHA1).